The primary structure comprises 151 residues: Globin-2 B chain (151 aa).

The residue at position 1 (Ser1) is an N-acetylserine. Residues 11 to 151 (VSNADQKDLL…SLVAVVQASL (141 aa)) form the Globin domain. His103 is a heme b binding site.

It belongs to the globin family. In terms of assembly, heterotetramer of two alpha chains and two beta chains.

This is Globin-2 B chain from Anadara inaequivalvis (Inequivalve ark).